A 468-amino-acid chain; its full sequence is Bifunctional protein GlmU (468 aa).

Residues 1–233 form a pyrophosphorylase region; that stretch reads MAQAGSASPL…LEEANLVNDR (233 aa). UDP-N-acetyl-alpha-D-glucosamine contacts are provided by residues 15 to 18, Lys-29, Gln-79, and 84 to 85; these read LAAG and GT. A Mg(2+)-binding site is contributed by Asp-109. UDP-N-acetyl-alpha-D-glucosamine contacts are provided by Gly-146, Glu-159, Asn-174, and Asn-231. Residue Asn-231 coordinates Mg(2+). The tract at residues 234–254 is linker; the sequence is SQLARAEEILRRRILDAHMKE. Positions 255 to 468 are N-acetyltransferase; it reads GVTVRDPVST…GDRRRARTEG (214 aa). Residues Arg-336 and Lys-354 each contribute to the UDP-N-acetyl-alpha-D-glucosamine site. The active-site Proton acceptor is His-366. Positions 369 and 380 each coordinate UDP-N-acetyl-alpha-D-glucosamine. Residues Ala-383, 389-390, and Ala-426 each bind acetyl-CoA; that span reads NY.

This sequence in the N-terminal section; belongs to the N-acetylglucosamine-1-phosphate uridyltransferase family. It in the C-terminal section; belongs to the transferase hexapeptide repeat family. As to quaternary structure, homotrimer. It depends on Mg(2+) as a cofactor.

The protein resides in the cytoplasm. It catalyses the reaction alpha-D-glucosamine 1-phosphate + acetyl-CoA = N-acetyl-alpha-D-glucosamine 1-phosphate + CoA + H(+). The enzyme catalyses N-acetyl-alpha-D-glucosamine 1-phosphate + UTP + H(+) = UDP-N-acetyl-alpha-D-glucosamine + diphosphate. It participates in nucleotide-sugar biosynthesis; UDP-N-acetyl-alpha-D-glucosamine biosynthesis; N-acetyl-alpha-D-glucosamine 1-phosphate from alpha-D-glucosamine 6-phosphate (route II): step 2/2. The protein operates within nucleotide-sugar biosynthesis; UDP-N-acetyl-alpha-D-glucosamine biosynthesis; UDP-N-acetyl-alpha-D-glucosamine from N-acetyl-alpha-D-glucosamine 1-phosphate: step 1/1. Its pathway is bacterial outer membrane biogenesis; LPS lipid A biosynthesis. Catalyzes the last two sequential reactions in the de novo biosynthetic pathway for UDP-N-acetylglucosamine (UDP-GlcNAc). The C-terminal domain catalyzes the transfer of acetyl group from acetyl coenzyme A to glucosamine-1-phosphate (GlcN-1-P) to produce N-acetylglucosamine-1-phosphate (GlcNAc-1-P), which is converted into UDP-GlcNAc by the transfer of uridine 5-monophosphate (from uridine 5-triphosphate), a reaction catalyzed by the N-terminal domain. The polypeptide is Bifunctional protein GlmU (Rubrobacter xylanophilus (strain DSM 9941 / JCM 11954 / NBRC 16129 / PRD-1)).